We begin with the raw amino-acid sequence, 281 residues long: uncharacterized protein (281 aa).

An N-terminal signal peptide occupies residues methionine 1–serine 23. A lipid anchor (N-palmitoyl cysteine) is attached at cysteine 24. Cysteine 24 carries the S-diacylglycerol cysteine lipid modification. Positions histidine 145–glutamate 165 are disordered. Positions histidine 150–histidine 161 are enriched in basic and acidic residues.

Its subcellular location is the cell membrane. This is an uncharacterized protein from Mycoplasma genitalium (strain ATCC 33530 / DSM 19775 / NCTC 10195 / G37) (Mycoplasmoides genitalium).